The sequence spans 218 residues: Probable transaldolase (218 aa).

The Schiff-base intermediate with substrate role is filled by lysine 84.

The protein belongs to the transaldolase family. Type 3B subfamily.

The protein localises to the cytoplasm. It catalyses the reaction D-sedoheptulose 7-phosphate + D-glyceraldehyde 3-phosphate = D-erythrose 4-phosphate + beta-D-fructose 6-phosphate. Its pathway is carbohydrate degradation; pentose phosphate pathway; D-glyceraldehyde 3-phosphate and beta-D-fructose 6-phosphate from D-ribose 5-phosphate and D-xylulose 5-phosphate (non-oxidative stage): step 2/3. Functionally, transaldolase is important for the balance of metabolites in the pentose-phosphate pathway. This Bartonella henselae (strain ATCC 49882 / DSM 28221 / CCUG 30454 / Houston 1) (Rochalimaea henselae) protein is Probable transaldolase.